The chain runs to 142 residues: Probable transport accessory protein MmpS1 (142 aa).

Helical transmembrane passes span 8-28 and 81-101; these read FWIP…VSRL and VVNA…AVVA.

Belongs to the MmpS family.

The protein localises to the cell membrane. The sequence is that of Probable transport accessory protein MmpS1 (mmpS1) from Mycobacterium bovis (strain ATCC BAA-935 / AF2122/97).